A 478-amino-acid chain; its full sequence is Chromosomal replication initiator protein DnaA (478 aa).

Residues 1–71 form a domain I, interacts with DnaA modulators region; it reads MKEFWQTCVS…EALAAEWFQR (71 aa). Residues 71–140 are domain II; the sequence is RPVQVAFELP…DAAGVVYERS (70 aa). Residues 141-357 form a domain III, AAA+ region region; that stretch reads RLNTDLTFDN…GALRKVLAYA (217 aa). 4 residues coordinate ATP: glycine 185, glycine 187, lysine 188, and threonine 189. Residues 358–478 form a domain IV, binds dsDNA region; it reads RFHGRDVLSV…LHVLEQTLKG (121 aa).

It belongs to the DnaA family. As to quaternary structure, oligomerizes as a right-handed, spiral filament on DNA at oriC.

The protein localises to the cytoplasm. In terms of biological role, plays an essential role in the initiation and regulation of chromosomal replication. ATP-DnaA binds to the origin of replication (oriC) to initiate formation of the DNA replication initiation complex once per cell cycle. Binds the DnaA box (a 9 base pair repeat at the origin) and separates the double-stranded (ds)DNA. Forms a right-handed helical filament on oriC DNA; dsDNA binds to the exterior of the filament while single-stranded (ss)DNA is stabiized in the filament's interior. The ATP-DnaA-oriC complex binds and stabilizes one strand of the AT-rich DNA unwinding element (DUE), permitting loading of DNA polymerase. After initiation quickly degrades to an ADP-DnaA complex that is not apt for DNA replication. Binds acidic phospholipids. The sequence is that of Chromosomal replication initiator protein DnaA from Bordetella petrii (strain ATCC BAA-461 / DSM 12804 / CCUG 43448).